A 182-amino-acid chain; its full sequence is Putative manganese efflux pump MntP (182 aa).

Helical transmembrane passes span 6-26 (LIPLIIMAFALGMDAFSVSLG), 37-57 (ILYIGVTIGIFHIIMPFIGMV), 71-91 (HFAGAILLIGLGFYIVYSSIL), 101-121 (IGISLFVFAFGVSIDSFSVGL), 131-151 (IITILLFGFVSMLLAWIGLFI), and 162-182 (YGEIVGGIILVGFGLYLLFPI).

The protein belongs to the MntP (TC 9.B.29) family.

The protein resides in the cell membrane. Probably functions as a manganese efflux pump. The sequence is that of Putative manganese efflux pump MntP from Bacillus cereus (strain ATCC 10987 / NRS 248).